We begin with the raw amino-acid sequence, 144 residues long: Maximins 3/H9 type 2 (144 aa).

Residues 1–18 form the signal peptide; that stretch reads MNFKYIVAVSFLIASAYA. Propeptides lie at residues 19–43 and 74–123; these read RSVQ…REIR and TAEE…KEKR. An Isoleucine amide modification is found at isoleucine 143.

Belongs to the bombinin family. Expressed by the skin glands.

Its subcellular location is the secreted. Functionally, maximin-3 shows antibacterial activity against both Gram-positive and Gram-negative bacteria. It also shows antimicrobial activity against the fungus C.albicans, but not against A.flavus nor P.uticale. It has little hemolytic activity. It possess a significant cytotoxicity against tumor cell lines. It possess a significant anti-HIV activity. It shows high spermicidal activity. In terms of biological role, maximin-H9 shows antimicrobial activity against bacteria and against the fungus C.albicans. Shows strong hemolytic activity. The protein is Maximins 3/H9 type 2 of Bombina maxima (Giant fire-bellied toad).